The primary structure comprises 308 residues: KH domain-containing protein At4g26480 (308 aa).

The interval 1 to 26 is disordered; sequence MMMMTSLGGGAGGGGGGGGSGGGRFV. A compositionally biased stretch (gly residues) spans 7 to 24; the sequence is LGGGAGGGGGGGGSGGGR. Positions 165-232 constitute a KH domain; that stretch reads DIPVDKYPNY…EHLNEPLHIL (68 aa). The segment at 284–308 is disordered; the sequence is EEGSPMSGSISPYNSLGMKRAKTRG. At S294 the chain carries Phosphoserine.

Its subcellular location is the nucleus. In Arabidopsis thaliana (Mouse-ear cress), this protein is KH domain-containing protein At4g26480.